The following is a 479-amino-acid chain: UDP-glycosyltransferase 71B6 (479 aa).

UDP-alpha-D-glucose contacts are provided by residues serine 275, 342–344, 359–367, and 381–384; these read AEQ, HGGWNSTLE, and YAEQ.

This sequence belongs to the UDP-glycosyltransferase family.

In terms of biological role, glucosyltransferase that glucosylates the (+) enantiomer of abscisic acid ((+)-ABA). Is not active on structural analogs with alterations to the 8'- and 9'- methyl groups. This is UDP-glycosyltransferase 71B6 (UGT71B6) from Arabidopsis thaliana (Mouse-ear cress).